A 232-amino-acid chain; its full sequence is Ion-translocating oxidoreductase complex subunit E (232 aa).

The next 6 helical transmembrane spans lie at 18-38 (GLVQ…ITNA), 39-59 (LGLG…VSLV), 69-89 (IPVF…LINA), 93-113 (GLYL…IIIG), 127-147 (AAFD…VLGA), and 182-202 (PFLL…LIAL).

The protein belongs to the NqrDE/RnfAE family. In terms of assembly, the complex is composed of six subunits: RnfA, RnfB, RnfC, RnfD, RnfE and RnfG.

The protein localises to the cell inner membrane. Part of a membrane-bound complex that couples electron transfer with translocation of ions across the membrane. The chain is Ion-translocating oxidoreductase complex subunit E from Shewanella baltica (strain OS185).